The chain runs to 379 residues: GPN-loop GTPase QQT2 (379 aa).

An N-acetylmethionine modification is found at methionine 1. 51-56 (GSGKTS) serves as a coordination point for GTP. The Gly-Pro-Asn (GPN)-loop; involved in dimer interface signature appears at 108–110 (GPN). GTP is bound by residues 211–214 (NKTD) and alanine 267. Residues 288–322 (METYKADLDMRKADKERLEEERKKHEMEKLRKDME) are a coiled coil. Basic and acidic residues-rich tracts occupy residues 303–322 (ERLEEERKKHEMEKLRKDME) and 335–346 (LKDRDATEKMML). The interval 303-379 (ERLEEERKKH…EDDETKHYYL (77 aa)) is disordered. The span at 347–372 (EEDDEDFQVEDEEDSDDAIDEDDEDD) shows a compositional bias: acidic residues.

The protein belongs to the GPN-loop GTPase family. In terms of assembly, heterodimer with QQT1. As to expression, expressed in individual cells of roots, leaves and flowers.

Its subcellular location is the cytoplasm. It is found in the nucleus. The protein resides in the cytoskeleton. It localises to the spindle. The protein localises to the phragmoplast. In terms of biological role, small GTPase that is essential for the correct formation of the tangential divisions in early embryos. Associates with microtubule during mitosis and may function in the positioning of the division plane. May participate in the patterning of the early embryo at the octant-dermatogen transition. The polypeptide is GPN-loop GTPase QQT2 (Arabidopsis thaliana (Mouse-ear cress)).